We begin with the raw amino-acid sequence, 436 residues long: Glutamate-1-semialdehyde 2,1-aminomutase 2 (436 aa).

Lys271 is subject to N6-(pyridoxal phosphate)lysine.

Belongs to the class-III pyridoxal-phosphate-dependent aminotransferase family. HemL subfamily. In terms of assembly, homodimer. The cofactor is pyridoxal 5'-phosphate.

Its subcellular location is the cytoplasm. The enzyme catalyses (S)-4-amino-5-oxopentanoate = 5-aminolevulinate. The protein operates within porphyrin-containing compound metabolism; protoporphyrin-IX biosynthesis; 5-aminolevulinate from L-glutamyl-tRNA(Glu): step 2/2. The chain is Glutamate-1-semialdehyde 2,1-aminomutase 2 from Exiguobacterium sibiricum (strain DSM 17290 / CCUG 55495 / CIP 109462 / JCM 13490 / 255-15).